A 572-amino-acid chain; its full sequence is MNVRVTTMDAELEFAIQQSTTGKQLFDQVVKTIGLREVWFFGLQYTDSKGDLTWIKLYKKVMSQDVQKGDPLQFKFRAKFYPEDVAEELIQDITLRLFYLQVKNAILSDEIYCPPETSVLLASYAVQARHGDYNKTTHTPGFLVNDRLLPQRVIDQHKMSKDEWENSITTWWQEHRGMLREDAMMEYLKIAQDLEMYGVNYFEIRNKKGTELWLGVDALGLNIYEKDDRLTPKIGFPWSEIRNISFNDRKFIIKPIDKKAPDFVFFAPRVRINKRILALCMGNHELYMRRRKPDTIDVQQMKAQAREEKNAKQQEREKLQLALAARERAEKKQQEYEDRIRNMQEEMERSQANLIEAQDMIRRLEEQLKQLQAAKDDLEQRQNELQVMITRLEETKNMEAAERAKLEDEIRMKQEEVHKIQEEVSVKDSETKRLQEEVEEARRKQTEAAAALLAATTTPSHHHVEEEEEMDNEEELVNGENGNQDFSKDFDTDEHIKDPVEERRTLAERNERLHDQLKALKQDLALSRDDTMETANDKIHRENVRQGRDKYKTLREIRKGNTKRRVDQFENM.

The FERM domain occupies 1–291 (MNVRVTTMDA…GNHELYMRRR (291 aa)). The tract at residues 456–491 (TTTPSHHHVEEEEEMDNEEELVNGENGNQDFSKDFD) is disordered. The span at 466–477 (EEEEMDNEEELV) shows a compositional bias: acidic residues. A Phosphothreonine modification is found at Thr553.

In terms of assembly, interacts with cytoskeletal actin.

The protein resides in the cell junction. It is found in the adherens junction. The protein localises to the cell projection. Its subcellular location is the microvillus. It localises to the rhabdomere. The protein resides in the cell membrane. It is found in the cytoplasm. The protein localises to the cytoskeleton. Involved in connections of major cytoskeletal structures to the plasma membrane. The chain is Moesin/ezrin/radixin homolog 1 from Culex quinquefasciatus (Southern house mosquito).